A 330-amino-acid chain; its full sequence is Putative glycosyltransferase HI_0258 (330 aa).

Positions 1-31 are enriched in basic and acidic residues; it reads MTDRQTDRQTDRQTDRQTDRQTDRQTDRQTD. The tract at residues 1 to 32 is disordered; it reads MTDRQTDRQTDRQTDRQTDRQTDRQTDRQTDG. UDP is bound by residues 44 to 49 and 140 to 141; these read SSDHYY and DV. Mn(2+) contacts are provided by D140, D142, and H270. Residue 270-276 coordinates UDP; the sequence is HYCGPNK.

It belongs to the glycosyltransferase 8 family.

This chain is Putative glycosyltransferase HI_0258, found in Haemophilus influenzae (strain ATCC 51907 / DSM 11121 / KW20 / Rd).